The sequence spans 490 residues: MASYGEEREIQKNYWKEHSVGLSVEAMMLDSKASDLDKEERPEILAFLPPIEGTTVLEFGAGIGRFTTELAQKAGQVIAVDFIESVIKKNENINGHYKNVKFLCADVTSPNMNFPNESMDLIFSNWLLMYLSDQEVEDLAKKMLQWTKVGGYIFFRESCFHQSGDNKRKYNPTHYREPKFYTKLFKECHMNDEDGNSYELSLVSCKCIGAYVRNKKNQNQICWLWQKVSSDNDRGFQRFLDNVQYKSSGILRYERVFGEGFVSTGGLETTKEFVDMLDLKPGQKVLDVGCGIGGGDFYMAENFDVDVVGIDLSVNMISFALEHAIGLKCSVEFEVADCTKKEYPDNTFDVIYSRDTILHIQDKPALFRRFYKWLKPGGKVLITDYCRSPKTPSPDFAIYIKKRGYDLHDVQAYGQMLRDAGFEEVIAEDRTDQFMKVLKRELDAVEKEKEEFISDFSKEDYEDIIGGWKSKLLRSSSGEQKWGLFIAKRN.

Residues glycine 60, arginine 65, aspartate 81, aspartate 106, valine 107, and asparagine 125 each coordinate S-adenosyl-L-homocysteine. Residues serine 158, serine 163, glycine 164, arginine 168, and tyrosine 175 each coordinate phosphocholine. N-methylethanolamine phosphate is bound by residues 244–245 and tyrosine 253; that span reads QY. Tyrosine 253 is a phosphocholine binding site. S-adenosyl-L-homocysteine contacts are provided by valine 262, serine 263, glycine 289, aspartate 311, aspartate 337, cysteine 338, and arginine 354. Phosphocholine contacts are provided by tyrosine 385, tyrosine 399, arginine 403, tyrosine 405, and lysine 471. Residues tyrosine 385, tyrosine 399, 403-405, and lysine 471 each bind N-methylethanolamine phosphate; that span reads RGY.

It belongs to the class I-like SAM-binding methyltransferase superfamily. PEAMT family. In terms of tissue distribution, expressed in root vasculature, shoots, rosettes leaves, cauline leaves, sepals, petals, anther filaments and ovules. Highly expressed in leaf vasculature.

The protein resides in the cytoplasm. It catalyses the reaction phosphoethanolamine + S-adenosyl-L-methionine = N-methylethanolamine phosphate + S-adenosyl-L-homocysteine + H(+). It carries out the reaction N-methylethanolamine phosphate + S-adenosyl-L-methionine = N,N-dimethylethanolamine phosphate + S-adenosyl-L-homocysteine + H(+). The enzyme catalyses N,N-dimethylethanolamine phosphate + S-adenosyl-L-methionine = phosphocholine + S-adenosyl-L-homocysteine + H(+). Its pathway is phospholipid metabolism; phosphatidylcholine biosynthesis; phosphocholine from phosphoethanolamine: step 1/1. Its function is as follows. Involved in phosphocholine biosynthesis. Catalyzes the N-methylation of phosphoethanolamine, phosphomonomethylethanolamine and phosphodimethylethanolamine, the three methylation steps required to convert phosphoethanolamine to phosphocholine (PC). In association with NMT1, regulates PC homeostasis, phase transition at the shoot apex, coordinated organ development, and fertility. In associtation with NMT1, involved in phosphatidylcholine biosynthesis and vascular development. This Arabidopsis thaliana (Mouse-ear cress) protein is Phosphoethanolamine N-methyltransferase 3.